The sequence spans 203 residues: MEVLLGITGKDFTIIAASKAAMRGATILKASDDKTRSLNKHTLMAFSGEAGDTVQFAEYTQANAQLYSMRNGTDLSPSALANFVRGELATSLRSRKPYNVNLLLGGVDPITHKPSLYWLDYLASLAKVPYAAHGYAQYYCLSILDKHHHPDITLHQGIKLLNLCTDELKRRLPIDFKGMTVKAVTKDGIIDIEFDDDKVVKMA.

It belongs to the peptidase T1B family. The 26S proteasome consists of a 20S proteasome core and two 19S regulatory subunits. The 20S proteasome core is composed of 28 subunits that are arranged in four stacked rings, resulting in a barrel-shaped structure. The two end rings are each formed by seven alpha subunits, and the two central rings are each formed by seven beta subunits. The catalytic chamber with the active sites is on the inside of the barrel.

Its subcellular location is the cytoplasm. It is found in the nucleus. Functionally, non-catalytic component of the proteasome, a multicatalytic proteinase complex which is characterized by its ability to cleave peptides with Arg, Phe, Tyr, Leu, and Glu adjacent to the leaving group at neutral or slightly basic pH. The proteasome has an ATP-dependent proteolytic activity. This chain is Probable proteasome subunit beta type-4 (pcb-4), found in Neurospora crassa (strain ATCC 24698 / 74-OR23-1A / CBS 708.71 / DSM 1257 / FGSC 987).